We begin with the raw amino-acid sequence, 603 residues long: Golgin subfamily A member 8B (603 aa).

Disordered regions lie at residues 1–82 (MAEE…NSRS), 95–125 (LKQQKKQVEHQLEEEKKANNEKQKAERELEG), 398–419 (TSAEKEPEAAVPASGTGGESSG), and 460–492 (PGDSAKDASPGGGHHQAGPGQGGEEGEAAGAAG). Low complexity predominate over residues 46-66 (AASGGCHSSEASSSASSSLHA). Residues 69–82 (SPCQEQAAVLNSRS) show a composition bias toward polar residues. 2 coiled-coil regions span residues 82 to 173 (SIKI…GELE) and 212 to 440 (LKGH…LELG). The segment covering 100–124 (KQVEHQLEEEKKANNEKQKAERELE) has biased composition (basic and acidic residues). The segment covering 469-482 (PGGGHHQAGPGQGG) has biased composition (gly residues). The segment at 491-603 (AGDGVAACGS…CWAWLPRRRR (113 aa)) is golgi-targeting domain.

The protein belongs to the GOLGA8 family. As to expression, highly expressed in brain, heart and kidney. Detected at lower levels in liver, thymus, spleen, lung and peripheral blood leukocytes.

It localises to the golgi apparatus. Its subcellular location is the golgi stack membrane. Its function is as follows. May be involved in maintaining Golgi structure. This chain is Golgin subfamily A member 8B (GOLGA8B), found in Homo sapiens (Human).